Consider the following 442-residue polypeptide: 26S proteasome non-ATPase regulatory subunit 12 homolog A (442 aa).

Positions Lys-6–Ala-137 form a coiled coil. Residues Glu-232–Asp-403 enclose the PCI domain.

It belongs to the proteasome subunit p55 family. Component of the 19S regulatory particle (RP/PA700) lid subcomplex of the 26S proteasome. The 26S proteasome is composed of a core protease (CP), known as the 20S proteasome, capped at one or both ends by the 19S regulatory particle (RP/PA700). The RP/PA700 complex is composed of at least 17 different subunits in two subcomplexes, the base and the lid, which form the portions proximal and distal to the 20S proteolytic core, respectively. Ubiquitous with highest expression in flowers.

The protein localises to the cytoplasm. Its subcellular location is the nucleus. Functionally, acts as a regulatory subunit of the 26 proteasome which is involved in the ATP-dependent degradation of ubiquitinated proteins. Required for gametogenesis and sporophyte development. Acts redundantly with RPN5B. The chain is 26S proteasome non-ATPase regulatory subunit 12 homolog A (RPN5A) from Arabidopsis thaliana (Mouse-ear cress).